We begin with the raw amino-acid sequence, 274 residues long: tRNA-cytidine(32) 2-sulfurtransferase (274 aa).

The PP-loop motif signature appears at 40–45 (SGGKDS). [4Fe-4S] cluster contacts are provided by C115, C118, and C206.

It belongs to the TtcA family. As to quaternary structure, homodimer. Mg(2+) is required as a cofactor. The cofactor is [4Fe-4S] cluster.

Its subcellular location is the cytoplasm. The catalysed reaction is cytidine(32) in tRNA + S-sulfanyl-L-cysteinyl-[cysteine desulfurase] + AH2 + ATP = 2-thiocytidine(32) in tRNA + L-cysteinyl-[cysteine desulfurase] + A + AMP + diphosphate + H(+). The protein operates within tRNA modification. Functionally, catalyzes the ATP-dependent 2-thiolation of cytidine in position 32 of tRNA, to form 2-thiocytidine (s(2)C32). The sulfur atoms are provided by the cysteine/cysteine desulfurase (IscS) system. The sequence is that of tRNA-cytidine(32) 2-sulfurtransferase from Pseudomonas entomophila (strain L48).